A 971-amino-acid polypeptide reads, in one-letter code: Exportin-2 (971 aa).

Met1 is subject to N-acetylmethionine. Residues 29-102 (AEKFLESVEG…KANIVHLMLS (74 aa)) enclose the Importin N-terminal domain. The residue at position 112 (Ser112) is a Phosphoserine. Lys574 and Lys824 each carry N6-acetyllysine. Residue Ser931 is modified to Phosphoserine.

The protein belongs to the XPO2/CSE1 family. As to quaternary structure, found in a complex with CSE1L/XPO2, Ran and KPNA2. Binds with high affinity to importin-alpha only in the presence of RanGTP. The complex is dissociated by the combined action of RanBP1 and RanGAP1. Interacts with CFTR.

The protein localises to the cytoplasm. It localises to the nucleus. In terms of biological role, export receptor for importin-alpha. Mediates importin-alpha re-export from the nucleus to the cytoplasm after import substrates (cargos) have been released into the nucleoplasm. In the nucleus binds cooperatively to importin-alpha and to the GTPase Ran in its active GTP-bound form. Docking of this trimeric complex to the nuclear pore complex (NPC) is mediated through binding to nucleoporins. Upon transit of a nuclear export complex into the cytoplasm, disassembling of the complex and hydrolysis of Ran-GTP to Ran-GDP (induced by RANBP1 and RANGAP1, respectively) cause release of the importin-alpha from the export receptor. CSE1L/XPO2 then return to the nuclear compartment and mediate another round of transport. The directionality of nuclear export is thought to be conferred by an asymmetric distribution of the GTP- and GDP-bound forms of Ran between the cytoplasm and nucleus. In Bos taurus (Bovine), this protein is Exportin-2 (CSE1L).